Consider the following 488-residue polypeptide: Inosine-5'-monophosphate dehydrogenase (488 aa).

2 CBS domains span residues 95-153 and 157-216; these read VISN…SIKI and MTKE…AKDE. NAD(+) contacts are provided by residues Asp250 and 300 to 302; that span reads GIG. Residues Gly302 and Gly304 each contribute to the K(+) site. Residue Ser305 coordinates IMP. Residue Cys307 participates in K(+) binding. Cys307 (thioimidate intermediate) is an active-site residue. IMP is bound by residues 340-342, 363-364, and 387-391; these read DGG, GS, and YRGMG. Catalysis depends on Arg403, which acts as the Proton acceptor. Glu417 serves as a coordination point for IMP. Residues 467 to 488 form a disordered region; the sequence is AGLAESHPHDVQITKESPNYSF. K(+) contacts are provided by Glu471, Ser472, and His473.

This sequence belongs to the IMPDH/GMPR family. Homotetramer. K(+) is required as a cofactor.

It carries out the reaction IMP + NAD(+) + H2O = XMP + NADH + H(+). It functions in the pathway purine metabolism; XMP biosynthesis via de novo pathway; XMP from IMP: step 1/1. Its activity is regulated as follows. Mycophenolic acid (MPA) is a non-competitive inhibitor that prevents formation of the closed enzyme conformation by binding to the same site as the amobile flap. In contrast, mizoribine monophosphate (MZP) is a competitive inhibitor that induces the closed conformation. MPA is a potent inhibitor of mammalian IMPDHs but a poor inhibitor of the bacterial enzymes. MZP is a more potent inhibitor of bacterial IMPDH. In terms of biological role, catalyzes the conversion of inosine 5'-phosphate (IMP) to xanthosine 5'-phosphate (XMP), the first committed and rate-limiting step in the de novo synthesis of guanine nucleotides, and therefore plays an important role in the regulation of cell growth. The sequence is that of Inosine-5'-monophosphate dehydrogenase from Staphylococcus saprophyticus subsp. saprophyticus (strain ATCC 15305 / DSM 20229 / NCIMB 8711 / NCTC 7292 / S-41).